Here is a 36-residue protein sequence, read N- to C-terminus: Pancreatic polypeptide (36 aa).

At Tyr-36 the chain carries Tyrosine amide.

Belongs to the NPY family.

The protein localises to the secreted. Its function is as follows. Hormone secreted by pancreatic cells that acts as a regulator of pancreatic and gastrointestinal functions. The chain is Pancreatic polypeptide (PPY) from Meleagris gallopavo (Wild turkey).